The primary structure comprises 256 residues: Undecaprenyl-diphosphatase (256 aa).

8 consecutive transmembrane segments (helical) span residues 1 to 21 (MTIL…FLPI), 39 to 59 (NAIN…AVIF), 70 to 90 (IDLW…GFIF), 97 to 117 (LFSL…FLIV), 134 to 154 (AISL…LIPG), 176 to 196 (AEFS…YDLL), 205 to 225 (ANLI…YLSI), and 235 to 255 (FTFF…LLFF).

Belongs to the UppP family.

Its subcellular location is the cell inner membrane. It catalyses the reaction di-trans,octa-cis-undecaprenyl diphosphate + H2O = di-trans,octa-cis-undecaprenyl phosphate + phosphate + H(+). Functionally, catalyzes the dephosphorylation of undecaprenyl diphosphate (UPP). Confers resistance to bacitracin. This chain is Undecaprenyl-diphosphatase, found in Sulfurimonas denitrificans (strain ATCC 33889 / DSM 1251) (Thiomicrospira denitrificans (strain ATCC 33889 / DSM 1251)).